The following is a 706-amino-acid chain: Elongation factor G (706 aa).

Residues 8 to 297 (SYVRNIGIGA…AVVDYLPSPN (290 aa)) form the tr-type G domain. GTP is bound by residues 17–24 (AHIDAGKT), 95–99 (DTPGH), and 149–152 (NKMD).

This sequence belongs to the TRAFAC class translation factor GTPase superfamily. Classic translation factor GTPase family. EF-G/EF-2 subfamily.

It is found in the cytoplasm. Catalyzes the GTP-dependent ribosomal translocation step during translation elongation. During this step, the ribosome changes from the pre-translocational (PRE) to the post-translocational (POST) state as the newly formed A-site-bound peptidyl-tRNA and P-site-bound deacylated tRNA move to the P and E sites, respectively. Catalyzes the coordinated movement of the two tRNA molecules, the mRNA and conformational changes in the ribosome. This Orientia tsutsugamushi (strain Ikeda) (Rickettsia tsutsugamushi) protein is Elongation factor G.